A 714-amino-acid chain; its full sequence is Polyribonucleotide nucleotidyltransferase (714 aa).

Residues aspartate 487 and aspartate 493 each coordinate Mg(2+). One can recognise a KH domain in the interval proline 554–isoleucine 613. The S1 motif domain occupies glycine 623 to arginine 691.

Belongs to the polyribonucleotide nucleotidyltransferase family. It depends on Mg(2+) as a cofactor.

The protein localises to the cytoplasm. It catalyses the reaction RNA(n+1) + phosphate = RNA(n) + a ribonucleoside 5'-diphosphate. Involved in mRNA degradation. Catalyzes the phosphorolysis of single-stranded polyribonucleotides processively in the 3'- to 5'-direction. The polypeptide is Polyribonucleotide nucleotidyltransferase (Methylocella silvestris (strain DSM 15510 / CIP 108128 / LMG 27833 / NCIMB 13906 / BL2)).